The following is a 122-amino-acid chain: Large ribosomal subunit protein uL24 (122 aa).

Belongs to the universal ribosomal protein uL24 family. In terms of assembly, part of the 50S ribosomal subunit.

One of two assembly initiator proteins, it binds directly to the 5'-end of the 23S rRNA, where it nucleates assembly of the 50S subunit. In terms of biological role, located at the polypeptide exit tunnel on the outside of the subunit. The sequence is that of Large ribosomal subunit protein uL24 from Pyrobaculum arsenaticum (strain DSM 13514 / JCM 11321 / PZ6).